A 373-amino-acid polypeptide reads, in one-letter code: Septin homolog spn3 (373 aa).

The Septin-type G domain maps to 10 to 286 (KGIPLNLMVV…ETYRTEKLST (277 aa)). The segment at 20–27 (GDVGLGRT) is G1 motif. 20–27 (GDVGLGRT) provides a ligand contact to GTP. The segment at 79–82 (DTPH) is G3 motif. Residues 161–164 (AKAD) form a G4 motif region. Residues 162 to 170 (KADSLTAQE) and R235 contribute to the GTP site. S303 carries the post-translational modification Phosphoserine. Residues 311–357 (EDRLRAIELSVQKEIEEKRRQLLAREEALRALEEKLAASTAAMANAS) are a coiled coil.

It belongs to the TRAFAC class TrmE-Era-EngA-EngB-Septin-like GTPase superfamily. Septin GTPase family. As to quaternary structure, component of the septin complex composed of two copies of each spn1, spn2, spn3 and spn4.

The protein resides in the cytoplasm. Its subcellular location is the cell cortex. Its function is as follows. Plays a role in the cell cycle. Involved in a late stage of septum formation leading to the separation of the daughter cells. This chain is Septin homolog spn3 (spn3), found in Schizosaccharomyces pombe (strain 972 / ATCC 24843) (Fission yeast).